A 2506-amino-acid polypeptide reads, in one-letter code: Highly reducing polyketide synthase rstn3 (2506 aa).

The Ketosynthase family 3 (KS3) domain maps to 8–436; it reads VEPIAIVGMA…GANAHAILDA (429 aa). Catalysis depends on for beta-ketoacyl synthase activity residues cysteine 183, histidine 318, and histidine 358. The Malonyl-CoA:ACP transacylase (MAT) domain occupies 547–875; it reads FIFTGQGAQW…KMVGSLFLSG (329 aa). Residues 941–1050 form an N-terminal hotdog fold region; it reads HDLLGSRLPG…ASDQSISSVE (110 aa). The region spanning 941–1212 is the PKS/mFAS DH domain; that stretch reads HDLLGSRLPG…FSSLETAVGE (272 aa). The active-site Proton acceptor; for dehydratase activity is the histidine 973. Residues 1060-1212 are C-terminal hotdog fold; sequence NKDSYDRRWY…FSSLETAVGE (153 aa). The Proton donor; for dehydratase activity role is filled by aspartate 1125. A methyltransferase (CMet) domain region spans residues 1263-1563; it reads VTRLAIRSSA…SGADIVLDDY (301 aa). The region spanning 1827 to 2093 is the Enoyl reductase (ER) domain; sequence GRVDSFYFKE…QDDYVGRVVL (267 aa). The region spanning 2116–2296 is the Ketoreductase (KR) domain; it reads ASYLLIGCLG…QATSIALGMI (181 aa). Residues 2423–2501 enclose the Carrier domain; it reads AVKVTTLGLI…DLAEKVVALA (79 aa). Position 2460 is an O-(pantetheine 4'-phosphoryl)serine (serine 2460).

Pantetheine 4'-phosphate serves as cofactor.

It participates in antifungal biosynthesis. Its function is as follows. Highly reducing polyketide synthase; part of the gene cluster that mediates the biosynthesis of the tetrahydropyranyl antifungal agent restricticin that acts as an inhibitor of CYP51 and blocks the ergosterol biosynthesis. The highly reducing polyketide synthase rstn3, the short chain dehydrogenase rstn4, the cyclase rstn5, the FAD-dependent monooxygenase rstn6 and the enoylreductase rstn7 are required to generate the first stable intermediate desmethylrestrictinol. Rstn3 with rstn7 biosynthesize the first polyketide chain intermediate that is reduced by rstn4, followed by epoxidation by rstn6 before 6-endo cyclization via epoxide opening by rstn5 leads to desmethylrestrictinol. The methyltransferase rstn1 then catalyzes the C4 O-methylation of desmethylrestrictinol to produce restrictinol, and the nonribosomal peptide synthetase rstn8 catalyzes the C3 esterification of restrictinol with glycine that leads to restricticin. The protein is Highly reducing polyketide synthase rstn3 of Aspergillus nomiae NRRL (strain ATCC 15546 / NRRL 13137 / CBS 260.88 / M93).